Here is a 412-residue protein sequence, read N- to C-terminus: Subtilisin-like protease 6 (412 aa).

Positions M1 to G20 are cleaved as a signal peptide. A propeptide spanning residues A21 to N126 is cleaved from the precursor. The Inhibitor I9 domain occupies K36–T120. N-linked (GlcNAc...) asparagine glycans are attached at residues N123 and N126. The region spanning S135 to K412 is the Peptidase S8 domain. Residues D167 and H198 each act as charge relay system in the active site. 2 N-linked (GlcNAc...) asparagine glycosylation sites follow: N252 and N264. S358 (charge relay system) is an active-site residue. A glycan (N-linked (GlcNAc...) asparagine) is linked at N408.

It belongs to the peptidase S8 family.

It localises to the secreted. Functionally, secreted subtilisin-like serine protease with keratinolytic activity that contributes to pathogenicity. In Trichophyton equinum (Horse ringworm fungus), this protein is Subtilisin-like protease 6 (SUB6).